The sequence spans 356 residues: Cell division protein ZipA (356 aa).

At 1–6 (MEDLQL) the chain is on the periplasmic side. The chain crosses the membrane as a helical span at residues 7–27 (VLFVLGAIAIVAVLVHGFWSI). At 28–356 (RRQQPKSLKD…DYLHRIRANA (329 aa)) the chain is on the cytoplasmic side. The interval 132 to 155 (PAQPDFSLQPPVAKEQHRGPKVSR) is disordered.

It belongs to the ZipA family. Interacts with FtsZ via their C-terminal domains.

Its subcellular location is the cell inner membrane. Its function is as follows. Essential cell division protein that stabilizes the FtsZ protofilaments by cross-linking them and that serves as a cytoplasmic membrane anchor for the Z ring. Also required for the recruitment to the septal ring of downstream cell division proteins. The polypeptide is Cell division protein ZipA (Shewanella baltica (strain OS185)).